The following is a 1319-amino-acid chain: Uromodulin-like 1 (1319 aa).

Residues 1-22 (MMSRTVRLVLLALACTVDLSQA) form the signal peptide. Topologically, residues 23–1273 (SGFTENGLSL…CTKPVLGTGY (1251 aa)) are extracellular. The 74-residue stretch at 34 to 107 (SYQLCSYPVT…FEQLGLYCVL (74 aa)) folds into the EMI domain. 3 disulfide bridges follow: C38–C95, C62–C71, and C94–C105. The N-linked (GlcNAc...) asparagine glycan is linked to N90. An N-linked (GlcNAc...) asparagine glycan is attached at N110. The WAP domain maps to 115-159 (FASRPGVCPTAEAEPLSPSCSLDTDCSGLQKCCSWPGGRHCVSPT). 3 N-linked (GlcNAc...) asparagine glycosylation sites follow: N172, N193, and N243. The EGF-like 1; calcium-binding domain occupies 265–306 (DVNECLHSELQACSVREQCRNLEGSYQCVSSQRLNHTDEDCP). Cystine bridges form between C269-C283 and C277-C292. Residues 307–391 (PIRDFVALNV…ATLVVKTDAQ (85 aa)) form the Fibronectin type-III 1 domain. An N-linked (GlcNAc...) asparagine glycan is attached at N315. Residues 389-503 (DAQVFQVTIR…QRTFVQDWDE (115 aa)) enclose the SEA 1 domain. Positions 500-545 (DWDECAHSSEHDCHPSARCINLEGSYTCQCLTARDASPSRAGRVCE) constitute an EGF-like 2; calcium-binding domain. Cystine bridges form between C504–C518, C512–C527, and C529–C544. Disordered regions lie at residues 569–649 (TGIT…ITKD) and 664–703 (HSSP…PESP). Over residues 619 to 632 (TGQGQTHGTHQGTT) the composition is skewed to low complexity. Over residues 638–647 (TTRESQELIT) the composition is skewed to basic and acidic residues. Over residues 664–678 (HSSPTWKTPPNSTRL) the composition is skewed to polar residues. One can recognise a Fibronectin type-III 2 domain in the interval 709–795 (PIGKVTVSNV…QLKVRTVAQK (87 aa)). N-linked (GlcNAc...) asparagine glycosylation is found at N717 and N757. The SEA 2 domain occupies 792–904 (VAQKLAGNVR…GKTFMQDYNE (113 aa)). Positions 901 to 945 (DYNECDMKEDDCAPGTCRNTFGSFTCSCDEGGPDSQVEYSGRSCD) constitute an EGF-like 3; calcium-binding domain. Intrachain disulfides connect C905-C917, C912-C926, and C928-C944. Residues 939-966 (YSGRSCDGDPSGNMTQTPGSEWSPTPAG) form a disordered region. A compositionally biased stretch (polar residues) spans 950–961 (GNMTQTPGSEWS). Residue N951 is glycosylated (N-linked (GlcNAc...) asparagine). The ZP domain maps to 995-1238 (SCEIETVIIT…NSCRISCNDF (244 aa)). Residues C1160 and C1218 are joined by a disulfide bond. A helical membrane pass occupies residues 1274–1294 (IILLAAAALLVVAGATTLLIL). The Cytoplasmic segment spans residues 1295–1319 (RYQRVRQKYNLRIQTDDFSYQVFSQ).

The protein resides in the cell membrane. In Mus musculus (Mouse), this protein is Uromodulin-like 1 (Umodl1).